Here is a 149-residue protein sequence, read N- to C-terminus: Transcriptional repressor NrdR (149 aa).

A zinc finger spans residues 3 to 34 (CPFCSTEETKVIDSRLVSEGYQVRRRRECGNC). Positions 49-139 (PKVIKNDGTR…VYLSFDDINQ (91 aa)) constitute an ATP-cone domain.

This sequence belongs to the NrdR family. Requires Zn(2+) as cofactor.

Negatively regulates transcription of bacterial ribonucleotide reductase nrd genes and operons by binding to NrdR-boxes. This chain is Transcriptional repressor NrdR, found in Pasteurella multocida (strain Pm70).